Here is a 157-residue protein sequence, read N- to C-terminus: SsrA-binding protein (157 aa).

The disordered stretch occupies residues 128 to 157 (LARGKKQHDKRAAEKERDWEREKQRVMRRG). Over residues 137-157 (KRAAEKERDWEREKQRVMRRG) the composition is skewed to basic and acidic residues.

Belongs to the SmpB family.

The protein localises to the cytoplasm. In terms of biological role, required for rescue of stalled ribosomes mediated by trans-translation. Binds to transfer-messenger RNA (tmRNA), required for stable association of tmRNA with ribosomes. tmRNA and SmpB together mimic tRNA shape, replacing the anticodon stem-loop with SmpB. tmRNA is encoded by the ssrA gene; the 2 termini fold to resemble tRNA(Ala) and it encodes a 'tag peptide', a short internal open reading frame. During trans-translation Ala-aminoacylated tmRNA acts like a tRNA, entering the A-site of stalled ribosomes, displacing the stalled mRNA. The ribosome then switches to translate the ORF on the tmRNA; the nascent peptide is terminated with the 'tag peptide' encoded by the tmRNA and targeted for degradation. The ribosome is freed to recommence translation, which seems to be the essential function of trans-translation. The protein is SsrA-binding protein of Methylococcus capsulatus (strain ATCC 33009 / NCIMB 11132 / Bath).